Consider the following 386-residue polypeptide: Succinate--CoA ligase [ADP-forming] subunit beta (386 aa).

An ATP-grasp domain is found at 9–244 (KELLREFGVA…TTEEDPREVE (236 aa)). ATP-binding positions include Lys-46, 53-55 (GRG), Glu-99, Ser-102, and Glu-107. Mg(2+) contacts are provided by Asn-199 and Asp-213. Residues Asn-264 and 321 to 323 (GIM) contribute to the substrate site.

The protein belongs to the succinate/malate CoA ligase beta subunit family. As to quaternary structure, heterotetramer of two alpha and two beta subunits. The cofactor is Mg(2+).

It carries out the reaction succinate + ATP + CoA = succinyl-CoA + ADP + phosphate. It catalyses the reaction GTP + succinate + CoA = succinyl-CoA + GDP + phosphate. It participates in carbohydrate metabolism; tricarboxylic acid cycle; succinate from succinyl-CoA (ligase route): step 1/1. Its function is as follows. Succinyl-CoA synthetase functions in the citric acid cycle (TCA), coupling the hydrolysis of succinyl-CoA to the synthesis of either ATP or GTP and thus represents the only step of substrate-level phosphorylation in the TCA. The beta subunit provides nucleotide specificity of the enzyme and binds the substrate succinate, while the binding sites for coenzyme A and phosphate are found in the alpha subunit. The chain is Succinate--CoA ligase [ADP-forming] subunit beta from Exiguobacterium sp. (strain ATCC BAA-1283 / AT1b).